The chain runs to 217 residues: UPF0502 protein VF_A0604 (217 aa).

It belongs to the UPF0502 family.

The sequence is that of UPF0502 protein VF_A0604 from Aliivibrio fischeri (strain ATCC 700601 / ES114) (Vibrio fischeri).